The primary structure comprises 433 residues: Trigger factor (433 aa).

In terms of domain architecture, PPIase FKBP-type spans 161–246 (NDRVIIDFVG…LNKVENMILP (86 aa)).

Belongs to the FKBP-type PPIase family. Tig subfamily.

It is found in the cytoplasm. The catalysed reaction is [protein]-peptidylproline (omega=180) = [protein]-peptidylproline (omega=0). In terms of biological role, involved in protein export. Acts as a chaperone by maintaining the newly synthesized protein in an open conformation. Functions as a peptidyl-prolyl cis-trans isomerase. The sequence is that of Trigger factor from Haemophilus ducreyi (strain 35000HP / ATCC 700724).